A 42-amino-acid chain; its full sequence is uncharacterized protein (42 aa).

Residues 18–38 traverse the membrane as a helical segment; it reads VGAISLTVMMILFFIAIVWFL.

It is found in the host membrane. This is an uncharacterized protein from His1 virus (isolate Australia/Victoria) (His1V).